The primary structure comprises 588 residues: Pescadillo homolog (588 aa).

The interval 1–54 is required for 28S ribosomal RNA processing; sequence MGGLEKKKYERGSATNYITRNKARKKLQLSLADFRRLCILKGIYPHEPKHKKKV. Positions 1–257 are sufficient for nucleolar localization; sequence MGGLEKKKYE…PKLEGQAQAE (257 aa). Residue Lys98 is modified to N6-acetyllysine. The disordered stretch occupies residues 294–314; the sequence is EAEVDEFPTDGEMSAQEEDRR. Residues 306-415 form a sufficient for interaction with MAP1B region; it reads MSAQEEDRRK…LLLPVAEYFS (110 aa). The BRCT domain maps to 322–415; the sequence is KHKKLFEGLK…LLLPVAEYFS (94 aa). The interval 448 to 515 is disordered; it reads GEDPGNLNES…GKKPRVMAGT (68 aa). The segment covering 456–486 has biased composition (acidic residues); sequence ESEEEEEEDDNNEGDGDEEGENEEEEEDAEA. The span at 487–508 shows a compositional bias: basic and acidic residues; that stretch reads GSEKEEEARLAALEEQRMEGKK. Lys517 participates in a covalent cross-link: Glycyl lysine isopeptide (Lys-Gly) (interchain with G-Cter in SUMO1); alternate. Lys517 is covalently cross-linked (Glycyl lysine isopeptide (Lys-Gly) (interchain with G-Cter in SUMO2); alternate). Residues 539-588 are required for 28S ribosomal RNA processing; the sequence is MMKKREKYLYQKIMFGKRRKIREANKLAEKRKAHDEAVRSEKKAKKARPE. Residues 565–588 are disordered; it reads LAEKRKAHDEAVRSEKKAKKARPE.

It belongs to the pescadillo family. In terms of assembly, component of the PeBoW complex, composed of BOP1, PES1 and WDR12. The complex is held together by BOP1, which interacts with PES1 via its N-terminal domain and with WDR12 via a high-affinity interaction between the seven-bladed beta-propeller domains of the 2 proteins. The PeBoW complex associates with the 66S pre-ribosome. The PeBoW complex also associates with DDX27, PES1 interacts directly with DDX27. Interacts with IRS1 and UBTF. May interact with MAP1B. Sumoylated. As to expression, significant levels are detected in a variety of cancer cell lines, including glioblastoma, breast carcinoma, colon carcinoma and cervical carcinoma cells. Levels are abnormally elevated in malignant tumors of astrocytic origin.

It is found in the nucleus. The protein localises to the nucleolus. The protein resides in the nucleoplasm. Its subcellular location is the chromosome. Its function is as follows. Component of the PeBoW complex, which is required for maturation of 28S and 5.8S ribosomal RNAs and formation of the 60S ribosome. The sequence is that of Pescadillo homolog from Homo sapiens (Human).